We begin with the raw amino-acid sequence, 169 residues long: Probable prefoldin subunit 3 (169 aa).

This sequence belongs to the prefoldin subunit alpha family. In terms of assembly, heterohexamer of two PFD-alpha type and four PFD-beta type subunits.

Its function is as follows. Binds specifically to cytosolic chaperonin (c-CPN) and transfers target proteins to it. Binds to nascent polypeptide chain and promotes folding in an environment in which there are many competing pathways for nonnative proteins. The protein is Probable prefoldin subunit 3 of Schizosaccharomyces pombe (strain 972 / ATCC 24843) (Fission yeast).